We begin with the raw amino-acid sequence, 71 residues long: Defensin-like protein 292 (71 aa).

3 disulfides stabilise this stretch: Cys-44-Cys-64, Cys-50-Cys-69, and Cys-56-Cys-71.

The protein belongs to the DEFL family.

The chain is Defensin-like protein 292 from Arabidopsis thaliana (Mouse-ear cress).